A 125-amino-acid chain; its full sequence is Neuraminyllactose-binding hemagglutinin (125 aa).

Residues 92–97 (KRTIQK) are N-acetyl-neuraminyl-alpha(2,3)-lactose binding motif.

The protein localises to the cell outer membrane. In Helicobacter pylori (Campylobacter pylori), this protein is Neuraminyllactose-binding hemagglutinin (hpaA).